A 179-amino-acid polypeptide reads, in one-letter code: Cell division protein SepF (179 aa).

A disordered region spans residues 18-55 (EDSSLPYEKRDEPVFTPVNSSQEPALPMNQPSQSAGTK). The span at 34-55 (PVNSSQEPALPMNQPSQSAGTK) shows a compositional bias: polar residues.

Belongs to the SepF family. In terms of assembly, homodimer. Interacts with FtsZ.

It localises to the cytoplasm. Cell division protein that is part of the divisome complex and is recruited early to the Z-ring. Probably stimulates Z-ring formation, perhaps through the cross-linking of FtsZ protofilaments. Its function overlaps with FtsA. The protein is Cell division protein SepF of Streptococcus pneumoniae (strain ATCC 700669 / Spain 23F-1).